We begin with the raw amino-acid sequence, 227 residues long: Octanoyltransferase (227 aa).

The BPL/LPL catalytic domain maps to 31–209 (ANTIDEIWLV…VFLSLLGGTN (179 aa)). Substrate contacts are provided by residues 71-78 (RGGKITYH), 139-141 (SIG), and 152-154 (GLA). The Acyl-thioester intermediate role is filled by Cys170.

It belongs to the LipB family.

Its subcellular location is the cytoplasm. It carries out the reaction octanoyl-[ACP] + L-lysyl-[protein] = N(6)-octanoyl-L-lysyl-[protein] + holo-[ACP] + H(+). It functions in the pathway protein modification; protein lipoylation via endogenous pathway; protein N(6)-(lipoyl)lysine from octanoyl-[acyl-carrier-protein]: step 1/2. Functionally, catalyzes the transfer of endogenously produced octanoic acid from octanoyl-acyl-carrier-protein onto the lipoyl domains of lipoate-dependent enzymes. Lipoyl-ACP can also act as a substrate although octanoyl-ACP is likely to be the physiological substrate. This is Octanoyltransferase from Baumannia cicadellinicola subsp. Homalodisca coagulata.